A 157-amino-acid chain; its full sequence is Small ribosomal subunit protein uS7 (157 aa).

It belongs to the universal ribosomal protein uS7 family. As to quaternary structure, part of the 30S ribosomal subunit. Contacts proteins S9 and S11.

Its function is as follows. One of the primary rRNA binding proteins, it binds directly to 16S rRNA where it nucleates assembly of the head domain of the 30S subunit. Is located at the subunit interface close to the decoding center, probably blocks exit of the E-site tRNA. The chain is Small ribosomal subunit protein uS7 from Borreliella burgdorferi (strain ATCC 35210 / DSM 4680 / CIP 102532 / B31) (Borrelia burgdorferi).